A 204-amino-acid chain; its full sequence is DNA-binding transcriptional activator EvgA (204 aa).

The Response regulatory domain occupies Asn2–Lys117. At Asp52 the chain carries 4-aspartylphosphate. One can recognise an HTH luxR-type domain in the interval Asp137–Lys202. The segment at residues Asn161–Ser180 is a DNA-binding region (H-T-H motif).

Homodimer. In terms of processing, phosphorylated by EvgS.

It localises to the cytoplasm. Member of the two-component regulatory system EvgS/EvgA. Regulates the expression of emrKY operon and yfdX. Also seems to control expression of at least one other multidrug efflux operon. This chain is DNA-binding transcriptional activator EvgA (evgA), found in Escherichia coli O157:H7.